A 260-amino-acid polypeptide reads, in one-letter code: Glutathione S-transferase domain-containing protein DDB_G0274223 (260 aa).

The region spanning 7-96 (KVDYIFYTNN…YLAQKYNTFL (90 aa)) is the GST N-terminal domain. Residues 102-233 (NPHENSDVIT…GFKTFNPSAL (132 aa)) enclose the GST C-terminal domain.

Belongs to the GST superfamily.

The sequence is that of Glutathione S-transferase domain-containing protein DDB_G0274223 from Dictyostelium discoideum (Social amoeba).